Reading from the N-terminus, the 250-residue chain is Snake venom serine protease pictobin (250 aa).

The first 11 residues, alanine 1 to alanine 11, serve as a signal peptide directing secretion. Residues glutamine 12 to leucine 17 constitute a propeptide that is removed on maturation. In terms of domain architecture, Peptidase S1 spans valine 18–alanine 241. 5 disulfide bridges follow: cysteine 24/cysteine 155, cysteine 42/cysteine 58, cysteine 134/cysteine 202, cysteine 166/cysteine 181, and cysteine 192/cysteine 217. Residue histidine 57 is the Charge relay system of the active site. Asparagine 71 and asparagine 95 each carry an N-linked (GlcNAc...) asparagine glycan. Aspartate 102 (charge relay system) is an active-site residue. 2 N-linked (GlcNAc...) asparagine glycosylation sites follow: asparagine 146 and asparagine 162. Serine 196 acts as the Charge relay system in catalysis. Asparagine 243 is a glycosylation site (N-linked (GlcNAc...) asparagine).

It belongs to the peptidase S1 family. Snake venom subfamily. Monomer. Expressed by the venom gland.

Its subcellular location is the secreted. Its function is as follows. Snake venom serine protease that may impair the hemostatic system of the prey. This Bothrops pictus (Desert lancehead) protein is Snake venom serine protease pictobin.